Here is a 326-residue protein sequence, read N- to C-terminus: MSERARLALEDPLSTTHEPVLLSAALTFLAPRDGGRYIDATFGGGGHSRAILEASAPSGQVLAIDADPAAVARARALAERYPGRLLPCHGNFRDLARLAQSYGFVPVDGILFDLGLSSDQLADPARGFSFQLAGPLDMRFDPTSGEPAAVIVNTWSAEELAELFWQYGEEPRAWAIAQTIVAERARQPIETTTQLAALVARVAGSRRERIHPATRVFQALRIAVNQELEALAAGLAQAVELLRPGGRLVVIAFHSLEDRLVKQFFRREAAACLCPPGTPVCICGHRPRLRLLTPRPVRPSAEEITRNPRSRSARLRAAERIAHDGR.

Residues 45–47, Asp65, Asp113, and Gln120 contribute to the S-adenosyl-L-methionine site; that span reads GGH. Residues 299–326 are disordered; the sequence is PSAEEITRNPRSRSARLRAAERIAHDGR. The segment covering 316 to 326 has biased composition (basic and acidic residues); that stretch reads RAAERIAHDGR.

It belongs to the methyltransferase superfamily. RsmH family.

The protein resides in the cytoplasm. It carries out the reaction cytidine(1402) in 16S rRNA + S-adenosyl-L-methionine = N(4)-methylcytidine(1402) in 16S rRNA + S-adenosyl-L-homocysteine + H(+). Its function is as follows. Specifically methylates the N4 position of cytidine in position 1402 (C1402) of 16S rRNA. The polypeptide is Ribosomal RNA small subunit methyltransferase H (Thermomicrobium roseum (strain ATCC 27502 / DSM 5159 / P-2)).